We begin with the raw amino-acid sequence, 431 residues long: uncharacterized protein (431 aa).

This is an uncharacterized protein from Acanthamoeba polyphaga mimivirus (APMV).